Here is a 446-residue protein sequence, read N- to C-terminus: Protein dyf-7 (446 aa).

The first 24 residues, 1–24 (MNQLWRASCLQVLITFLLIHQNKA), serve as a signal peptide directing secretion. Positions 35–295 (DCIADSFTVV…KTCYKKVSDS (261 aa)) constitute a ZP domain. A disulfide bridge connects residues cysteine 211 and cysteine 273. The helical transmembrane segment at 377–397 (IPLIIMGSLASLLLFSAGAAI) threads the bilayer.

In terms of assembly, monomer under reducing conditions. Homodimer under non-reducing conditions. May also form higher order oligomers. Post-translationally, proteolytically cleaved and secreted in vitro. As to expression, in the embryo, expressed in the excretory cell and, during dendrite formation, in the non-neuronal cells surrounding the sensory neurons, including hypodermal cells.

The protein resides in the cell membrane. Its subcellular location is the cell projection. It localises to the dendrite. It is found in the secreted. Functionally, required for permeability of amphid and phasmid neurons to external dyes, chemotaxis to ammonium chloride, avoidance of high osmotic stimuli, male mating and dauer formation. Along with dex-1, enables neurite growth and maintenance by anchoring amphid dendritic tips during neuron cell body migration in embryonic and larval development. The sequence is that of Protein dyf-7 from Caenorhabditis elegans.